The chain runs to 499 residues: MPHPRRYHSSERGSRGSYHEHYQSRKHKRRRSRSWSSSSDRTRRRRREDSYHVRSRSSYDDHSSDRRLYDRRYCGSYRRNDYSRDRGEAYYDTDFRQSYEYHRENSSYRSQRSSRRKHRRRRRRSRTFSRSSSHSSRRAKSVEDDAEGHLIYHVGDWLQERYEIVSTLGEGTFGRVVQCVDHRRGGTQVALKIIKNVEKYKEAARLEINVLEKINEKDPDNKNLCVQMFDWFDYHGHMCISFELLGLSTFDFLKDNNYLPYPIHQVRHMAFQLCQAVKFLHDNKLTHTDLKPENILFVNSDYELTYNLEKKRDERSVKSTAVRVVDFGSATFDHEHHSTIVSTRHYRAPEVILELGWSQPCDVWSIGCIIFEYYVGFTLFQTHDNREHLAMMERILGPVPSRMIRKTRKQKYFYRGRLDWDENTSAGRYVRENCKPLRRYLTSEAEDHHQLFDLIENMLEYEPAKRLTLGEALQHPFFACLRTEPPNTKLWDSSRDISR.

The segment at 1 to 65 (MPHPRRYHSS…RSSYDDHSSD (65 aa)) is disordered. Residues 8–23 (HSSERGSRGSYHEHYQ) are compositionally biased toward basic and acidic residues. A compositionally biased stretch (basic residues) spans 24 to 33 (SRKHKRRRSR). Position 34 is a phosphoserine; by PKB/AKT1 (serine 34). The span at 47-65 (REDSYHVRSRSSYDDHSSD) shows a compositional bias: basic and acidic residues. Serine 98 carries the phosphoserine; by autocatalysis modification. Tyrosine 99 is modified (phosphotyrosine; by autocatalysis). The interval 102 to 142 (HRENSSYRSQRSSRRKHRRRRRRSRTFSRSSSHSSRRAKSV) is disordered. Residues 112–127 (RSSRRKHRRRRRRSRT) are compositionally biased toward basic residues. Phosphothreonine; by PKB/AKT1 is present on threonine 127. Serine 141 carries the phosphoserine; by autocatalysis modification. Residue tyrosine 152 is modified to Phosphotyrosine. The 317-residue stretch at 163–479 (EIVSTLGEGT…GEALQHPFFA (317 aa)) folds into the Protein kinase domain. ATP is bound by residues 168-176 (LGEGTFGRV) and lysine 192. Aspartate 289 (proton acceptor) is an active-site residue. Threonine 343 carries the phosphothreonine; by PKB/AKT2 modification.

Belongs to the protein kinase superfamily. CMGC Ser/Thr protein kinase family. Lammer subfamily. In terms of assembly, interacts with RBMX and UBL5. Interacts with AKT1. Autophosphorylates on all three types of residues. Phosphorylation on Ser-34 and Thr-127 by AKT1 is induced by ionizing radiation or insulin. Phosphorylation plays a critical role in cell proliferation following low dose radiation and prevents cell death following high dose radiation. Phosphorylation at Thr-343 by PKB/AKT2 induces its kinase activity which is required for its stability. The phosphorylation status at Ser-141 influences its subnuclear localization; inhibition of phosphorylation at Ser-141 results in accumulation in the nuclear speckle.

Its subcellular location is the nucleus. The protein resides in the nucleus speckle. The catalysed reaction is L-seryl-[protein] + ATP = O-phospho-L-seryl-[protein] + ADP + H(+). The enzyme catalyses L-threonyl-[protein] + ATP = O-phospho-L-threonyl-[protein] + ADP + H(+). It carries out the reaction L-tyrosyl-[protein] + ATP = O-phospho-L-tyrosyl-[protein] + ADP + H(+). 5,6-dichloro-1-b-D-ribofuranosylbenzimidazole (DRB) inhibits autophosphorylation. TG003 inhibits its kinase activity and affects the regulation of alternative splicing mediated by phosphorylation of SR proteins. Dual specificity kinase acting on both serine/threonine and tyrosine-containing substrates. Phosphorylates serine- and arginine-rich (SR) proteins of the spliceosomal complex. May be a constituent of a network of regulatory mechanisms that enable SR proteins to control RNA splicing and can cause redistribution of SR proteins from speckles to a diffuse nucleoplasmic distribution. Acts as a suppressor of hepatic gluconeogenesis and glucose output by repressing PPARGC1A transcriptional activity on gluconeogenic genes via its phosphorylation. Phosphorylates PPP2R5B thereby stimulating the assembly of PP2A phosphatase with the PPP2R5B-AKT1 complex leading to dephosphorylation of AKT1. Phosphorylates: PTPN1, SRSF1 and SRSF3. Regulates the alternative splicing of tissue factor (F3) pre-mRNA in endothelial cells. Phosphorylates PAGE4 at several serine and threonine residues and this phosphorylation attenuates the ability of PAGE4 to potentiate the transcriptional activator activity of JUN. In Mus musculus (Mouse), this protein is Dual specificity protein kinase CLK2 (Clk2).